Reading from the N-terminus, the 1409-residue chain is Tensin-2 (1409 aa).

The disordered stretch occupies residues 1–35; sequence MKSSGPVERLLRALGRRDSSRAASRPRKAEPHSFR. Positions 9–20 are enriched in basic and acidic residues; it reads RLLRALGRRDSS. The Phorbol-ester/DAG-type zinc-finger motif lies at 31-79; that stretch reads PHSFREKVFRKKPPVCAVCKVTIDGTGVSCRVCKVATHRKCEAKVTSAC. Thr91 is subject to Phosphothreonine. 2 positions are modified to phosphoserine: Ser118 and Ser120. The Phosphatase tensin-type domain maps to 122-294; sequence DPLMERRWDL…SYFSGLLSGS (173 aa). Cys231 (phosphocysteine intermediate) is an active-site residue. The region spanning 299-425 is the C2 tensin-type domain; sequence SSPLFLHYVL…ASVEFVFSSS (127 aa). Ser455 carries the phosphoserine modification. Tyr456 bears the Phosphotyrosine mark. Residues 462–536 form a disordered region; the sequence is HHEDSVDGSL…SPGRPPPTAA (75 aa). Ser466 carries the post-translational modification Phosphoserine. Thr474 carries the post-translational modification Phosphothreonine. Ser481 bears the Phosphoserine mark. Phosphotyrosine is present on Tyr483. Positions 491 to 506 are enriched in pro residues; sequence RQTPPAPSPEPPPPPM. Arg555 is subject to Omega-N-methylarginine. 3 disordered regions span residues 562 to 582, 812 to 1098, and 1111 to 1130; these read AILDDEEQPTVGGGPHLGVYP, PGEG…SSPA, and LSDNVPQTPEPPTQESQSNV. Residues Ser820, Ser825, Ser830, Ser832, Ser835, and Ser845 each carry the phosphoserine modification. Composition is skewed to polar residues over residues 900–918 and 930–940; these read SASSELSGPSTPLHTSSPV and RSPTSAPTQRL. Thr910 is modified (phosphothreonine). Ser931, Ser941, and Ser972 each carry phosphoserine. A compositionally biased stretch (pro residues) spans 968–982; the sequence is PLAPSPVSPTFPPSS. At Thr977 the chain carries Phosphothreonine. Residues Ser991 and Ser1003 each carry the phosphoserine modification. The segment covering 1046-1056 has biased composition (pro residues); that stretch reads PEPPQSSPTPA. An SH2 domain is found at 1140–1247; that stretch reads WYKPHLSRDQ…SLPCCLRIPS (108 aa). Phosphothreonine is present on Thr1182. Ser1247 carries the post-translational modification Phosphoserine. The region spanning 1275-1408 is the PTB domain; the sequence is ACSVLYLTSV…FITKVLLGQR (134 aa).

It belongs to the PTEN phosphatase protein family. In terms of assembly, interacts with AXL. Interacts with SYK; leading to its phosphorylation. Interacts with SQSTM1 (via PB1 domain); the interaction leads to sequestration of TNS2 in cytoplasmic aggregates with SQSTM1 and promotes TNS2 ubiquitination and proteasomal degradation. Post-translationally, ubiquitinated following sequestration in cytoplasmic aggregates with SQSTM1, leading to proteasomal degradation. Detected in heart, kidney, brain, thymus, spleen, liver, placenta, lung, skeletal muscle and small intestine.

It localises to the cell junction. The protein resides in the focal adhesion. It is found in the cell membrane. Its subcellular location is the cytoplasm. It catalyses the reaction O-phospho-L-tyrosyl-[protein] + H2O = L-tyrosyl-[protein] + phosphate. Functionally, tyrosine-protein phosphatase which regulates cell motility, proliferation and muscle-response to insulin. Phosphatase activity is mediated by binding to phosphatidylinositol-3,4,5-triphosphate (PtdIns(3,4,5)P3) via the SH2 domain. In muscles and under catabolic conditions, dephosphorylates IRS1 leading to its degradation and muscle atrophy. Negatively regulates PI3K-AKT pathway activation. Dephosphorylates nephrin NPHS1 in podocytes which regulates activity of the mTORC1 complex. Under normal glucose conditions, NPHS1 outcompetes IRS1 for binding to phosphatidylinositol 3-kinase (PI3K) which balances mTORC1 activity but high glucose conditions lead to up-regulation of TNS2, increased NPHS1 dephosphorylation and activation of mTORC1, contributing to podocyte hypertrophy and proteinuria. Required for correct podocyte morphology, podocyte-glomerular basement membrane interaction and integrity of the glomerular filtration barrier. Enhances RHOA activation in the presence of DLC1. Plays a role in promoting DLC1-dependent remodeling of the extracellular matrix. This chain is Tensin-2 (TNS2), found in Homo sapiens (Human).